The sequence spans 695 residues: Threonine--tRNA ligase (695 aa).

Positions 6-75 (SAIFVNTTDT…ETTATFTAVP (70 aa)) constitute a TGS domain. The segment at 274-580 (DHRRLGTELD…LLEHYAGAFP (307 aa)) is catalytic. Zn(2+) contacts are provided by cysteine 379, histidine 430, and histidine 557.

This sequence belongs to the class-II aminoacyl-tRNA synthetase family. In terms of assembly, homodimer. It depends on Zn(2+) as a cofactor.

Its subcellular location is the cytoplasm. The enzyme catalyses tRNA(Thr) + L-threonine + ATP = L-threonyl-tRNA(Thr) + AMP + diphosphate + H(+). Its function is as follows. Catalyzes the attachment of threonine to tRNA(Thr) in a two-step reaction: L-threonine is first activated by ATP to form Thr-AMP and then transferred to the acceptor end of tRNA(Thr). Also edits incorrectly charged L-seryl-tRNA(Thr). The polypeptide is Threonine--tRNA ligase (Corynebacterium glutamicum (strain ATCC 13032 / DSM 20300 / JCM 1318 / BCRC 11384 / CCUG 27702 / LMG 3730 / NBRC 12168 / NCIMB 10025 / NRRL B-2784 / 534)).